Consider the following 862-residue polypeptide: Mismatch repair endonuclease PMS2 (862 aa).

Residues asparagine 45, aspartate 70, glutamate 109, alanine 110, and leucine 111 each contribute to the ATP site. Basic and acidic residues-rich tracts occupy residues 391-401, 408-444, 484-495, and 528-552; these read DLEKPMVEKQD, TGEE…EPRR, PTDRAEVEKDSG, and GSQE…VDCH. The segment at 391-552 is disordered; the sequence is DLEKPMVEKQ…DDSFSDVDCH (162 aa). Threonine 573 is modified (phosphothreonine). Residues 577-580 carry the Nuclear localization signal motif; that stretch reads KRFK. Threonine 597 bears the Phosphothreonine mark.

The protein belongs to the DNA mismatch repair MutL/HexB family. As to quaternary structure, heterodimer of PMS2 and MLH1 (MutL alpha); this interaction is required for the stability of both partners. Forms a ternary complex with MutS alpha (MSH2-MSH6) or MutS beta (MSH2-MSH3). Part of the BRCA1-associated genome surveillance complex (BASC), which contains BRCA1, MSH2, MSH6, MLH1, ATM, BLM, PMS2 and the RAD50-MRE11-NBS1 protein complex. This association could be a dynamic process changing throughout the cell cycle and within subnuclear domains. Interacts with MTMR15/FAN1.

Its subcellular location is the nucleus. The enzyme catalyses ATP + H2O = ADP + phosphate + H(+). In terms of biological role, component of the post-replicative DNA mismatch repair system (MMR). Heterodimerizes with MLH1 to form MutL alpha. DNA repair is initiated by MutS alpha (MSH2-MSH6) or MutS beta (MSH2-MSH3) binding to a dsDNA mismatch, then MutL alpha is recruited to the heteroduplex. Assembly of the MutL-MutS-heteroduplex ternary complex in presence of RFC and PCNA is sufficient to activate endonuclease activity of PMS2. It introduces single-strand breaks near the mismatch and thus generates new entry points for the exonuclease EXO1 to degrade the strand containing the mismatch. DNA methylation would prevent cleavage and therefore assure that only the newly mutated DNA strand is going to be corrected. MutL alpha (MLH1-PMS2) interacts physically with the clamp loader subunits of DNA polymerase III, suggesting that it may play a role to recruit the DNA polymerase III to the site of the MMR. Also implicated in DNA damage signaling, a process which induces cell cycle arrest and can lead to apoptosis in case of major DNA damages. Possesses an ATPase activity, but in the absence of gross structural changes, ATP hydrolysis may not be necessary for proficient mismatch repair. In Homo sapiens (Human), this protein is Mismatch repair endonuclease PMS2.